The sequence spans 271 residues: Glutamate racemase (271 aa).

Substrate is bound by residues 12-13 (DS) and 44-45 (YG). The Proton donor/acceptor role is filled by C75. 76–77 (NS) is a binding site for substrate. Catalysis depends on C185, which acts as the Proton donor/acceptor. A substrate-binding site is contributed by 186 to 187 (TH).

This sequence belongs to the aspartate/glutamate racemases family.

It catalyses the reaction L-glutamate = D-glutamate. Its pathway is cell wall biogenesis; peptidoglycan biosynthesis. Provides the (R)-glutamate required for cell wall biosynthesis. In Mycobacterium bovis (strain ATCC BAA-935 / AF2122/97), this protein is Glutamate racemase.